The sequence spans 336 residues: tRNA N6-adenosine threonylcarbamoyltransferase (336 aa).

The Fe cation site is built by H112 and H116. Substrate is bound by residues 136 to 140 (LVSGG), D169, G182, and N276. Position 304 (D304) interacts with Fe cation.

It belongs to the KAE1 / TsaD family. Fe(2+) serves as cofactor.

Its subcellular location is the cytoplasm. The catalysed reaction is L-threonylcarbamoyladenylate + adenosine(37) in tRNA = N(6)-L-threonylcarbamoyladenosine(37) in tRNA + AMP + H(+). Functionally, required for the formation of a threonylcarbamoyl group on adenosine at position 37 (t(6)A37) in tRNAs that read codons beginning with adenine. Is involved in the transfer of the threonylcarbamoyl moiety of threonylcarbamoyl-AMP (TC-AMP) to the N6 group of A37, together with TsaE and TsaB. TsaD likely plays a direct catalytic role in this reaction. The protein is tRNA N6-adenosine threonylcarbamoyltransferase of Francisella tularensis subsp. holarctica (strain LVS).